A 298-amino-acid chain; its full sequence is 4-hydroxy-tetrahydrodipicolinate synthase (298 aa).

Thr-48 lines the pyruvate pocket. Tyr-137 acts as the Proton donor/acceptor in catalysis. Residue Lys-166 is the Schiff-base intermediate with substrate of the active site. Ile-207 provides a ligand contact to pyruvate.

Belongs to the DapA family. In terms of assembly, homotetramer; dimer of dimers.

The protein resides in the cytoplasm. The catalysed reaction is L-aspartate 4-semialdehyde + pyruvate = (2S,4S)-4-hydroxy-2,3,4,5-tetrahydrodipicolinate + H2O + H(+). Its pathway is amino-acid biosynthesis; L-lysine biosynthesis via DAP pathway; (S)-tetrahydrodipicolinate from L-aspartate: step 3/4. In terms of biological role, catalyzes the condensation of (S)-aspartate-beta-semialdehyde [(S)-ASA] and pyruvate to 4-hydroxy-tetrahydrodipicolinate (HTPA). The sequence is that of 4-hydroxy-tetrahydrodipicolinate synthase from Campylobacter hominis (strain ATCC BAA-381 / DSM 21671 / CCUG 45161 / LMG 19568 / NCTC 13146 / CH001A).